A 367-amino-acid polypeptide reads, in one-letter code: Peptide chain release factor 2 (367 aa).

Residue Q254 is modified to N5-methylglutamine.

This sequence belongs to the prokaryotic/mitochondrial release factor family. In terms of processing, methylated by PrmC. Methylation increases the termination efficiency of RF2.

The protein localises to the cytoplasm. Peptide chain release factor 2 directs the termination of translation in response to the peptide chain termination codons UGA and UAA. This is Peptide chain release factor 2 from Acidovorax ebreus (strain TPSY) (Diaphorobacter sp. (strain TPSY)).